Here is a 567-residue protein sequence, read N- to C-terminus: Berberine bridge enzyme-like D-1 (567 aa).

The N-terminal stretch at 1 to 33 (MKRNISMFLQLLLIILMMISFLFTSLLVPSVSA) is a signal peptide. Cysteine 42 and cysteine 103 form a disulfide bridge. An N-linked (GlcNAc...) asparagine glycan is attached at asparagine 50. Residues 81–257 (SKPKPTVIIV…YAWKIRLLKV (177 aa)) enclose the FAD-binding PCMH-type domain. Residue histidine 118 is modified to Pros-8alpha-FAD histidine. Residues asparagine 364 and asparagine 378 are each glycosylated (N-linked (GlcNAc...) asparagine).

This sequence belongs to the oxygen-dependent FAD-linked oxidoreductase family. Requires FAD as cofactor. Mostly expressed in roots at low levels.

Its subcellular location is the vacuole. It participates in alkaloid biosynthesis; nicotine biosynthesis. Its function is as follows. Involved in the biosynthesis of pyridine alkaloid natural products, leading mainly to the production of anabasine, anatabine, nicotine and nornicotine, effective deterrents against herbivores with antiparasitic and pesticide properties (neurotoxins); nornicotine serves as the precursor in the synthesis of the carcinogen compound N'-nitrosonornicotine (NNN). Catalyzes a late oxidation step subsequent to the pyridine ring condensation reaction in the biosynthesis of alkaloids. The polypeptide is Berberine bridge enzyme-like D-1 (Nicotiana tabacum (Common tobacco)).